The primary structure comprises 143 residues: 6,7-dimethyl-8-ribityllumazine synthase (143 aa).

Residues F13, 45–47 (TFD), and 69–71 (CVI) each bind 5-amino-6-(D-ribitylamino)uracil. A (2S)-2-hydroxy-3-oxobutyl phosphate-binding site is contributed by 74-75 (ET). Catalysis depends on H77, which acts as the Proton donor. Residue L102 participates in 5-amino-6-(D-ribitylamino)uracil binding. R117 lines the (2S)-2-hydroxy-3-oxobutyl phosphate pocket.

This sequence belongs to the DMRL synthase family.

It catalyses the reaction (2S)-2-hydroxy-3-oxobutyl phosphate + 5-amino-6-(D-ribitylamino)uracil = 6,7-dimethyl-8-(1-D-ribityl)lumazine + phosphate + 2 H2O + H(+). The protein operates within cofactor biosynthesis; riboflavin biosynthesis; riboflavin from 2-hydroxy-3-oxobutyl phosphate and 5-amino-6-(D-ribitylamino)uracil: step 1/2. Functionally, catalyzes the formation of 6,7-dimethyl-8-ribityllumazine by condensation of 5-amino-6-(D-ribitylamino)uracil with 3,4-dihydroxy-2-butanone 4-phosphate. This is the penultimate step in the biosynthesis of riboflavin. The sequence is that of 6,7-dimethyl-8-ribityllumazine synthase from Archaeoglobus fulgidus (strain ATCC 49558 / DSM 4304 / JCM 9628 / NBRC 100126 / VC-16).